Reading from the N-terminus, the 149-residue chain is Probable cyclic pyranopterin monophosphate synthase (149 aa).

Substrate contacts are provided by residues 67–69 (LCH) and 103–104 (ME). Asp-118 is a catalytic residue.

It belongs to the MoaC family. As to quaternary structure, homohexamer; trimer of dimers.

The catalysed reaction is (8S)-3',8-cyclo-7,8-dihydroguanosine 5'-triphosphate = cyclic pyranopterin phosphate + diphosphate. It participates in cofactor biosynthesis; molybdopterin biosynthesis. Its function is as follows. Catalyzes the conversion of (8S)-3',8-cyclo-7,8-dihydroguanosine 5'-triphosphate to cyclic pyranopterin monophosphate (cPMP). This Saccharolobus solfataricus (strain ATCC 35092 / DSM 1617 / JCM 11322 / P2) (Sulfolobus solfataricus) protein is Probable cyclic pyranopterin monophosphate synthase.